Here is a 329-residue protein sequence, read N- to C-terminus: MTKLGRRNDGGGKSHRSSTKRQRRTSVSVDDPSPGEEEEKTLVVLTDDSDSEEDDKPLGDVLRTCRKRRVSSPKSVTLPNSNVLECPNCFDPLKKPIFQCNNGHLACFLCCIKLKKRCSFCKLPIGDVRCRAMEKVIKAGLVSCSNAIYGCKQSTTYGNQLQSHEKVCVFAPCSCPIKDCNYIGFYKDLINHFRATHKVSPGDINSFVFDRPVIFGLDLDSSDKMVIFVEEKQGNLFVVQGFIGSHGVYATVSHIAPMVPEVRKFSCSLARLRPYSTLRLGLEVKNIQKLRSQEEQPQEDFLLIPSYMVNGDHMKMEISIGDKNDYTHI.

The span at 1 to 12 shows a compositional bias: basic and acidic residues; that stretch reads MTKLGRRNDGGG. The disordered stretch occupies residues 1 to 58; the sequence is MTKLGRRNDGGGKSHRSSTKRQRRTSVSVDDPSPGEEEEKTLVVLTDDSDSEEDDKPL. The segment covering 13-24 has biased composition (basic residues); sequence KSHRSSTKRQRR. An RING-type; degenerate zinc finger spans residues 86–122; that stretch reads CPNCFDPLKKPIFQCNNGHLACFLCCIKLKKRCSFCK. An SBD region spans residues 136-325; the sequence is VIKAGLVSCS…MEISIGDKND (190 aa). Residues 139–198 form an SIAH-type zinc finger; the sequence is AGLVSCSNAIYGCKQSTTYGNQLQSHEKVCVFAPCSCPIKDCNYIGFYKDLINHFRATHK. Cysteine 144, cysteine 151, histidine 164, cysteine 168, cysteine 175, cysteine 180, histidine 192, and histidine 197 together coordinate Zn(2+).

This sequence belongs to the SINA (Seven in absentia) family.

The catalysed reaction is S-ubiquitinyl-[E2 ubiquitin-conjugating enzyme]-L-cysteine + [acceptor protein]-L-lysine = [E2 ubiquitin-conjugating enzyme]-L-cysteine + N(6)-ubiquitinyl-[acceptor protein]-L-lysine.. Its pathway is protein modification; protein ubiquitination. In terms of biological role, E3 ubiquitin-protein ligase that mediates ubiquitination and subsequent proteasomal degradation of target proteins. E3 ubiquitin ligases accept ubiquitin from an E2 ubiquitin-conjugating enzyme in the form of a thioester and then directly transfers the ubiquitin to targeted substrates. It probably triggers the ubiquitin-mediated degradation of different substrates. The chain is E3 ubiquitin-protein ligase SINA-like 4 from Arabidopsis thaliana (Mouse-ear cress).